Here is a 92-residue protein sequence, read N- to C-terminus: Small ribosomal subunit protein uS19 (92 aa).

This sequence belongs to the universal ribosomal protein uS19 family.

In terms of biological role, protein S19 forms a complex with S13 that binds strongly to the 16S ribosomal RNA. This Rickettsia akari (strain Hartford) protein is Small ribosomal subunit protein uS19.